The chain runs to 315 residues: Zinc finger protein 691 (315 aa).

A compositionally biased stretch (polar residues) spans 1-10 (MSLCSPTHSA). A disordered region spans residues 1 to 90 (MSLCSPTHSA…QETHPKKPWQ (90 aa)). Residues 33–58 (GSEKEQSPEPHLPEEGEGGKPWRVDD) are compositionally biased toward basic and acidic residues. Phosphoserine is present on residues Ser-39, Ser-75, and Ser-77. Lys-113 is covalently cross-linked (Glycyl lysine isopeptide (Lys-Gly) (interchain with G-Cter in SUMO2)). C2H2-type zinc fingers lie at residues 115-137 (FICAQCGKTFNNTSNLRTHQRIH), 143-165 (YKCSECGKSFSRSSNRIRHERIH), 171-193 (YKCPKCQESFRRRSDLTTHQQDH), 199-221 (YRCDICGKSFSQSATLAVHHRTH), 227-249 (YICCECGKSFSNSSSFGVHHRTH), 255-277 (YECTECGRTFSDISNFGAHQRTH), and 283-305 (YRCTVCGKHFSRSSNLIRHQKTH).

It belongs to the krueppel C2H2-type zinc-finger protein family.

It is found in the nucleus. Functionally, may be involved in transcriptional regulation. The chain is Zinc finger protein 691 (ZNF691) from Homo sapiens (Human).